The sequence spans 237 residues: Class B acid phosphatase (237 aa).

A signal peptide spans 1-25 (MRKITLALSAACLLFSLNNAVVARA). Aspartate 69 acts as the Nucleophile in catalysis. The Mg(2+) site is built by aspartate 69 and aspartate 71. Aspartate 71 acts as the Proton donor in catalysis. Residues 137–138 (TG) and lysine 177 contribute to the substrate site. Position 192 (aspartate 192) interacts with Mg(2+).

The protein belongs to the class B bacterial acid phosphatase family. As to quaternary structure, homotetramer. Mg(2+) serves as cofactor.

The protein resides in the periplasm. The enzyme catalyses a phosphate monoester + H2O = an alcohol + phosphate. Its function is as follows. Dephosphorylates several organic phosphate monoesters. Also has a phosphotransferase activity catalyzing the transfer of low-energy phosphate groups from organic phosphate monoesters to free hydroxyl groups of various organic compounds. The polypeptide is Class B acid phosphatase (Enterobacter sp. (strain 638)).